Consider the following 230-residue polypeptide: 7-cyano-7-deazaguanine synthase (230 aa).

8–18 (LSGGMDSAVVT) contacts ATP. The Zn(2+) site is built by Cys-186, Cys-196, Cys-199, and Cys-202.

Belongs to the QueC family. Zn(2+) is required as a cofactor.

The enzyme catalyses 7-carboxy-7-deazaguanine + NH4(+) + ATP = 7-cyano-7-deazaguanine + ADP + phosphate + H2O + H(+). It participates in purine metabolism; 7-cyano-7-deazaguanine biosynthesis. Its function is as follows. Catalyzes the ATP-dependent conversion of 7-carboxy-7-deazaguanine (CDG) to 7-cyano-7-deazaguanine (preQ(0)). The polypeptide is 7-cyano-7-deazaguanine synthase (Xylella fastidiosa (strain M12)).